Reading from the N-terminus, the 247-residue chain is Probable chemoreceptor glutamine deamidase CheD (247 aa).

The interval 204–247 (KRPAAPQPARPRIELFGGRGTAPGAGSPSAGSPYAANLSRKQEA) is disordered. Residues 227 to 239 (GAGSPSAGSPYAA) show a composition bias toward low complexity.

The protein belongs to the CheD family.

The catalysed reaction is L-glutaminyl-[protein] + H2O = L-glutamyl-[protein] + NH4(+). In terms of biological role, probably deamidates glutamine residues to glutamate on methyl-accepting chemotaxis receptors (MCPs), playing an important role in chemotaxis. The sequence is that of Probable chemoreceptor glutamine deamidase CheD from Burkholderia orbicola (strain AU 1054).